Here is a 160-residue protein sequence, read N- to C-terminus: Nucleotide-binding protein TERTU_3542 (160 aa).

The protein belongs to the YajQ family.

In terms of biological role, nucleotide-binding protein. This is Nucleotide-binding protein TERTU_3542 from Teredinibacter turnerae (strain ATCC 39867 / T7901).